A 419-amino-acid chain; its full sequence is GTPase Obg (419 aa).

Residues methionine 1–methionine 156 form the Obg domain. The OBG-type G domain occupies alanine 157–isoleucine 334. GTP contacts are provided by residues glycine 163 to serine 170, phenylalanine 188 to valine 192, aspartate 209 to glycine 212, asparagine 278 to aspartate 281, and asparagine 315 to isoleucine 317. Mg(2+) contacts are provided by serine 170 and threonine 190. Positions isoleucine 342–asparagine 419 constitute an OCT domain.

It belongs to the TRAFAC class OBG-HflX-like GTPase superfamily. OBG GTPase family. As to quaternary structure, monomer. The cofactor is Mg(2+).

It localises to the cytoplasm. An essential GTPase which binds GTP, GDP and possibly (p)ppGpp with moderate affinity, with high nucleotide exchange rates and a fairly low GTP hydrolysis rate. Plays a role in control of the cell cycle, stress response, ribosome biogenesis and in those bacteria that undergo differentiation, in morphogenesis control. This is GTPase Obg from Mesomycoplasma hyopneumoniae (strain 7448) (Mycoplasma hyopneumoniae).